A 310-amino-acid chain; its full sequence is Glycine--tRNA ligase alpha subunit (310 aa).

Belongs to the class-II aminoacyl-tRNA synthetase family. Tetramer of two alpha and two beta subunits.

It is found in the cytoplasm. The catalysed reaction is tRNA(Gly) + glycine + ATP = glycyl-tRNA(Gly) + AMP + diphosphate. The protein is Glycine--tRNA ligase alpha subunit of Aliivibrio salmonicida (strain LFI1238) (Vibrio salmonicida (strain LFI1238)).